The sequence spans 376 residues: Alcohol dehydrogenase 6 (376 aa).

Residues cysteine 47, histidine 69, cysteine 99, cysteine 102, cysteine 105, cysteine 113, and cysteine 175 each coordinate Zn(2+). NAD(+)-binding positions include 200–205, aspartate 224, arginine 229, 293–295, and arginine 371; these read GLGGVG and VGA.

The protein belongs to the zinc-containing alcohol dehydrogenase family. Class-V subfamily. As to quaternary structure, dimer. Requires Zn(2+) as cofactor.

Its subcellular location is the cytoplasm. It catalyses the reaction a primary alcohol + NAD(+) = an aldehyde + NADH + H(+). The catalysed reaction is a secondary alcohol + NAD(+) = a ketone + NADH + H(+). Alcohol dehydrogenase. Catalyzes the NAD-dependent oxidation of primary alcohols to the corresponding aldehydes. Oxidizes secondary alcohols to the corresponding ketones. In Rattus norvegicus (Rat), this protein is Alcohol dehydrogenase 6 (Adh6).